The following is a 140-amino-acid chain: MAKKITGYIKLQVPAGKANPSPPIGPALGQHGVNIMEFCKAFNAKTQADEGTITPVVITVYADRSFTFITKTPPAPVLIKKALGLQSGSAVPNKTKVGKLTKDQVREIATKKMPDLNAASLEAAMKTIEGTARSMGVEIV.

Belongs to the universal ribosomal protein uL11 family. In terms of assembly, part of the ribosomal stalk of the 50S ribosomal subunit. Interacts with L10 and the large rRNA to form the base of the stalk. L10 forms an elongated spine to which L12 dimers bind in a sequential fashion forming a multimeric L10(L12)X complex. Post-translationally, one or more lysine residues are methylated.

Forms part of the ribosomal stalk which helps the ribosome interact with GTP-bound translation factors. In Geobacter sp. (strain M21), this protein is Large ribosomal subunit protein uL11.